The primary structure comprises 742 residues: Eukaryotic translation initiation factor 3 subunit B (742 aa).

Over residues 1-10 (MAPSFDTLSE) the composition is skewed to polar residues. A disordered region spans residues 1-20 (MAPSFDTLSEQDLHEEEEEE). Residues 40 to 126 (TFVVIDGLPI…HTLAVNKLMD (87 aa)) form the RRM domain. 5 WD repeats span residues 193–230 (AHWT…KLKQ), 232–290 (PHPF…RSFV), 304–345 (QPKK…LLGK), 515–558 (IEKK…EKPE), and 573–611 (VEHY…HTFA).

This sequence belongs to the eIF-3 subunit B family. Component of the eukaryotic translation initiation factor 3 (eIF-3) complex.

The protein resides in the cytoplasm. Its function is as follows. RNA-binding component of the eukaryotic translation initiation factor 3 (eIF-3) complex, which is involved in protein synthesis of a specialized repertoire of mRNAs and, together with other initiation factors, stimulates binding of mRNA and methionyl-tRNAi to the 40S ribosome. The eIF-3 complex specifically targets and initiates translation of a subset of mRNAs involved in cell proliferation. The sequence is that of Eukaryotic translation initiation factor 3 subunit B (prt1) from Aspergillus terreus (strain NIH 2624 / FGSC A1156).